Consider the following 272-residue polypeptide: uncharacterized protein (272 aa).

The first 20 residues, Met1–Ala20, serve as a signal peptide directing secretion. Cys21 carries N-palmitoyl cysteine lipidation. The S-diacylglycerol cysteine moiety is linked to residue Cys21.

Belongs to the MG439/MG440 family.

It is found in the cell membrane. This is an uncharacterized protein from Mycoplasma genitalium (strain ATCC 33530 / DSM 19775 / NCTC 10195 / G37) (Mycoplasmoides genitalium).